Reading from the N-terminus, the 1200-residue chain is uncharacterized protein (1200 aa).

5 disordered regions span residues 282-302, 323-372, 392-491, 510-568, and 1056-1200; these read SQESRGESPSREAGTSSGCTS, LSEA…PQGS, SQEP…KASL, RAKS…RIGA, and SCPE…LASL. Over residues 420-435 the composition is skewed to low complexity; that stretch reads ASSPRLSPASPAAAAS. Residues 437–448 are compositionally biased toward basic and acidic residues; that stretch reads TKIEVKTKERNG. The span at 518-527 shows a compositional bias: polar residues; that stretch reads GTTQTKTSGP. Residues 1137–1153 are compositionally biased toward basic and acidic residues; sequence EDGKGSHKLPDPAREHL. Over residues 1160–1171 the composition is skewed to low complexity; it reads RQQPPRQSQVPR. A compositionally biased stretch (polar residues) spans 1175–1200; the sequence is GSFSSEGTDSQTSLEDSPQTSPLASL.

This is an uncharacterized protein from Homo sapiens (Human).